The sequence spans 344 residues: Ketol-acid reductoisomerase (NADP(+)) (344 aa).

The 180-residue stretch at 2 to 181 (AKVLYEKDIQ…GAARAGVLET (180 aa)) folds into the KARI N-terminal Rossmann domain. NADP(+)-binding positions include 25–28 (YGSQ), Arg48, Ser52, and 82–85 (DEMQ). His107 is a catalytic residue. Gly133 lines the NADP(+) pocket. The KARI C-terminal knotted domain maps to 182–327 (SFQEETETDL…RELRELMPFV (146 aa)). Residues Asp190, Glu194, Glu226, and Glu230 each coordinate Mg(2+). Ser251 is a substrate binding site.

This sequence belongs to the ketol-acid reductoisomerase family. The cofactor is Mg(2+).

It carries out the reaction (2R)-2,3-dihydroxy-3-methylbutanoate + NADP(+) = (2S)-2-acetolactate + NADPH + H(+). The catalysed reaction is (2R,3R)-2,3-dihydroxy-3-methylpentanoate + NADP(+) = (S)-2-ethyl-2-hydroxy-3-oxobutanoate + NADPH + H(+). It participates in amino-acid biosynthesis; L-isoleucine biosynthesis; L-isoleucine from 2-oxobutanoate: step 2/4. Its pathway is amino-acid biosynthesis; L-valine biosynthesis; L-valine from pyruvate: step 2/4. Its function is as follows. Involved in the biosynthesis of branched-chain amino acids (BCAA). Catalyzes an alkyl-migration followed by a ketol-acid reduction of (S)-2-acetolactate (S2AL) to yield (R)-2,3-dihydroxy-isovalerate. In the isomerase reaction, S2AL is rearranged via a Mg-dependent methyl migration to produce 3-hydroxy-3-methyl-2-ketobutyrate (HMKB). In the reductase reaction, this 2-ketoacid undergoes a metal-dependent reduction by NADPH to yield (R)-2,3-dihydroxy-isovalerate. This chain is Ketol-acid reductoisomerase (NADP(+)), found in Oceanobacillus iheyensis (strain DSM 14371 / CIP 107618 / JCM 11309 / KCTC 3954 / HTE831).